The following is a 265-amino-acid chain: O-methyltransferase NEC2 (265 aa).

Belongs to the methyltransferase superfamily.

The enzyme catalyses desmethylnectriapyrone + S-adenosyl-L-methionine = nectriapyrone + S-adenosyl-L-homocysteine + H(+). Its function is as follows. O-methyltransferase; part of the gene cluster that mediates the biosynthesis of nectriapyrone and its analogs phomopyrone A, acropyrone and zaepyrone. The nectriapyrone biosynthetic gene cluster consists of two genes, the highly reducing polyketide synthase NEC1 that produces a demethylated analog of nectriapyrone from one unit of acetyl-CoA and one unit of malonyl-CoA; and the O-methyltransferase NEC2 that further methylates the NEC1 product to yield nectriapyrone. Nectriapyrone is further hydrolyzed to nectriapyrone D, also known as gulypyrone B, by an unidentified hydrolase localized outside the nectriapyrone cluster. The sequence is that of O-methyltransferase NEC2 from Pyricularia oryzae (strain 70-15 / ATCC MYA-4617 / FGSC 8958) (Rice blast fungus).